Here is a 79-residue protein sequence, read N- to C-terminus: Translation initiation factor IF-1, chloroplastic (79 aa).

Residues 1 to 74 (MTRKNIDLIE…HRGRITFRLR (74 aa)) enclose the S1-like domain.

Belongs to the IF-1 family. Component of the 30S ribosomal translation pre-initiation complex which assembles on the 30S ribosome in the order IF-2 and IF-3, IF-1 and N-formylmethionyl-tRNA(fMet); mRNA recruitment can occur at any time during PIC assembly.

It is found in the plastid. It localises to the chloroplast. Functionally, one of the essential components for the initiation of protein synthesis. Stabilizes the binding of IF-2 and IF-3 on the 30S subunit to which N-formylmethionyl-tRNA(fMet) subsequently binds. Helps modulate mRNA selection, yielding the 30S pre-initiation complex (PIC). Upon addition of the 50S ribosomal subunit IF-1, IF-2 and IF-3 are released leaving the mature 70S translation initiation complex. The sequence is that of Translation initiation factor IF-1, chloroplastic from Chlorella vulgaris (Green alga).